A 350-amino-acid chain; its full sequence is S-adenosylmethionine:tRNA ribosyltransferase-isomerase (350 aa).

Belongs to the QueA family. Monomer.

The protein localises to the cytoplasm. It carries out the reaction 7-aminomethyl-7-carbaguanosine(34) in tRNA + S-adenosyl-L-methionine = epoxyqueuosine(34) in tRNA + adenine + L-methionine + 2 H(+). Its pathway is tRNA modification; tRNA-queuosine biosynthesis. Its function is as follows. Transfers and isomerizes the ribose moiety from AdoMet to the 7-aminomethyl group of 7-deazaguanine (preQ1-tRNA) to give epoxyqueuosine (oQ-tRNA). The sequence is that of S-adenosylmethionine:tRNA ribosyltransferase-isomerase from Aliivibrio fischeri (strain ATCC 700601 / ES114) (Vibrio fischeri).